An 81-amino-acid polypeptide reads, in one-letter code: Protease inhibitor 3 (81 aa).

Residues 1–24 (MSSGCLLLLLGLLTLWAELTPVSG) form the signal peptide. The 51-residue stretch at 29 to 79 (CELPAESGLCNAYIPSFYYNPHSHKCQKFMYGGCGGNANNFKTIVECHRTC) folds into the BPTI/Kunitz inhibitor domain. Disulfide bonds link Cys29–Cys79, Cys38–Cys62, and Cys54–Cys75.

The protein belongs to the venom Kunitz-type family. Expressed by the venom gland.

The protein resides in the secreted. Its function is as follows. Snake venom serine protease inhibitor. The polypeptide is Protease inhibitor 3 (Walterinnesia aegyptia (Desert black snake)).